The sequence spans 270 residues: Feruloyl esterase C (270 aa).

The first 21 residues, 1-21 (MLRAVLLPTLLAFGAFTPVHG), serve as a signal peptide directing secretion.

Belongs to the faeC family.

The protein localises to the secreted. It catalyses the reaction feruloyl-polysaccharide + H2O = ferulate + polysaccharide.. Functionally, involved in degradation of plant cell walls. Hydrolyzes the feruloyl-arabinose ester bond in arabinoxylans, and the feruloyl-galactose ester bond in pectin. Active against paranitrophenyl-acetate, methyl ferulate and wheat arabinoxylan. The chain is Feruloyl esterase C (faeC) from Emericella nidulans (strain FGSC A4 / ATCC 38163 / CBS 112.46 / NRRL 194 / M139) (Aspergillus nidulans).